The following is a 483-amino-acid chain: Altronate oxidoreductase (483 aa).

Residue 18–29 (IIQFGEGNFLRA) participates in NAD(+) binding.

The protein belongs to the mannitol dehydrogenase family. UxaB subfamily.

The enzyme catalyses D-altronate + NAD(+) = keto-D-tagaturonate + NADH + H(+). The protein operates within carbohydrate metabolism; pentose and glucuronate interconversion. This Klebsiella pneumoniae subsp. pneumoniae (strain ATCC 700721 / MGH 78578) protein is Altronate oxidoreductase.